Consider the following 197-residue polypeptide: Large ribosomal subunit protein bL25 (197 aa).

It belongs to the bacterial ribosomal protein bL25 family. CTC subfamily. In terms of assembly, part of the 50S ribosomal subunit; part of the 5S rRNA/L5/L18/L25 subcomplex. Contacts the 5S rRNA. Binds to the 5S rRNA independently of L5 and L18.

Functionally, this is one of the proteins that binds to the 5S RNA in the ribosome where it forms part of the central protuberance. The chain is Large ribosomal subunit protein bL25 from Lawsonia intracellularis (strain PHE/MN1-00).